Consider the following 272-residue polypeptide: Energy-coupling factor transporter ATP-binding protein EcfA1 (272 aa).

The ABC transporter domain maps to I5 to E239. ATP is bound at residue G37–S44. The active-site Proton acceptor is E163.

It belongs to the ABC transporter superfamily. Energy-coupling factor EcfA family. As to quaternary structure, forms a stable energy-coupling factor (ECF) transporter complex probably composed of 2 membrane-embedded substrate-binding proteins (S component), 2 ATP-binding proteins (A component) and 2 transmembrane proteins (T component). This complex interacts with a number of substrate-specific components, including FolT, PanT and RibU for 5-formyltetrahydrofolate, pantothenate and riboflavin respectively.

It is found in the cell membrane. Its function is as follows. ATP-binding (A) component of a common energy-coupling factor (ECF) ABC-transporter complex. Unlike classic ABC transporters this ECF transporter provides the energy necessary to transport a number of different substrates including 5-formyltetrahydrofolate, pantothenate and riboflavin. Expression of the complex plus FolT in E.coli allows 5-formyltetrahydrofolate uptake; 5-formyltetrahydrofolate is not taken up in the absence of FolT or the EcfA1A2T complex. The chain is Energy-coupling factor transporter ATP-binding protein EcfA1 from Leuconostoc mesenteroides subsp. mesenteroides (strain ATCC 8293 / DSM 20343 / BCRC 11652 / CCM 1803 / JCM 6124 / NCDO 523 / NBRC 100496 / NCIMB 8023 / NCTC 12954 / NRRL B-1118 / 37Y).